Consider the following 289-residue polypeptide: Proteasome assembly chaperone 1 (289 aa).

Positions 1–38 (MAATFFGEVVKAPCRAGTEEEEEEEEQSRRDTPEDREV) are disordered. The residue at position 2 (Ala2) is an N-acetylalanine. A Phosphothreonine modification is found at Thr18. The span at 27 to 38 (QSRRDTPEDREV) shows a compositional bias: basic and acidic residues. Position 55 is a phosphothreonine (Thr55). Ser181 carries the post-translational modification Phosphoserine. Position 265 is an N6-acetyllysine (Lys265).

Belongs to the PSMG1 family. As to quaternary structure, forms a heterodimer with PSMG2. The PSMG1-PSMG2 heterodimer interacts directly with the PSMA5 and PSMA7 proteasome alpha subunits. Degraded by the proteasome upon completion of 20S proteasome maturation. In terms of tissue distribution, highly expressed in testis with moderate expression in brain, liver and kidney and low levels in heart, skeletal muscle and pancreas.

The protein localises to the cytoplasm. It is found in the endoplasmic reticulum. In terms of biological role, chaperone protein which promotes assembly of the 20S proteasome as part of a heterodimer with PSMG2. The PSMG1-PSMG2 heterodimer binds to the PSMA5 and PSMA7 proteasome subunits, promotes assembly of the proteasome alpha subunits into the heteroheptameric alpha ring and prevents alpha ring dimerization. This Mus musculus (Mouse) protein is Proteasome assembly chaperone 1.